A 209-amino-acid chain; its full sequence is MASKYPEEGPITEGVEEDFNSHSTSGLDLTSGNKEEPLISLALLSMHTSKIVVWIRDHFFVKILSFGGKQKLYYICNQCHKGIPESGYITLNTKYYLYEKGPTETGTKGLTLMRRHVQNSPCFLNSRKESGTPKTDPTRPATSYSLCRSDYQEAGCSRPTPSNSESVCNGLGQPSERGHTSGESGGIMEEVSFISWLEGLWGEGFDYAN.

Disordered regions lie at residues 1 to 30 (MASK…LDLT), 123 to 143 (FLNS…PATS), and 156 to 185 (CSRP…GESG). 2 stretches are compositionally biased toward polar residues: residues 21–30 (SHSTSGLDLT) and 132–143 (TPKTDPTRPATS).

Its function is as follows. Transcriptional transactivator that activates the viral internal promoter (IP), thereby enhancing its own expression. This transactivation is repressed by nuclear factor I. Also transactivates the long terminal repeat (LTR) promoter, thereby inducing structural gene expression, initiating the late phase of infection. It is therefore a key regulator of viral gene expression. It directly binds to and activates DNA target sites of viral promoters and those of distinct cellular genes. Required for viral replication. The sequence is that of Protein Bel-1 (bel1) from Felis catus (Cat).